Reading from the N-terminus, the 202-residue chain is Small ribosomal subunit protein uS4 (202 aa).

One can recognise an S4 RNA-binding domain in the interval 93 to 156 (RRLDNMVYRL…KDLKIISEAV (64 aa)).

This sequence belongs to the universal ribosomal protein uS4 family. Part of the 30S ribosomal subunit. Contacts protein S5. The interaction surface between S4 and S5 is involved in control of translational fidelity.

One of the primary rRNA binding proteins, it binds directly to 16S rRNA where it nucleates assembly of the body of the 30S subunit. In terms of biological role, with S5 and S12 plays an important role in translational accuracy. The sequence is that of Small ribosomal subunit protein uS4 from Pediococcus pentosaceus (strain ATCC 25745 / CCUG 21536 / LMG 10740 / 183-1w).